The primary structure comprises 429 residues: Adenylosuccinate synthetase (429 aa).

Residues 12 to 18 (GDEGKGK) and 40 to 42 (GHT) each bind GTP. The Proton acceptor role is filled by aspartate 13. Mg(2+) is bound by residues aspartate 13 and glycine 40. Residues 13–16 (DEGK), 38–41 (NAGH), threonine 130, arginine 144, glutamine 225, threonine 240, and arginine 304 each bind IMP. Histidine 41 (proton donor) is an active-site residue. 300 to 306 (ATTGRPR) contacts substrate. GTP is bound by residues arginine 306, 332–334 (KLD), and 414–416 (SVG).

This sequence belongs to the adenylosuccinate synthetase family. As to quaternary structure, homodimer. It depends on Mg(2+) as a cofactor.

It is found in the cytoplasm. The enzyme catalyses IMP + L-aspartate + GTP = N(6)-(1,2-dicarboxyethyl)-AMP + GDP + phosphate + 2 H(+). Its pathway is purine metabolism; AMP biosynthesis via de novo pathway; AMP from IMP: step 1/2. Functionally, plays an important role in the de novo pathway of purine nucleotide biosynthesis. Catalyzes the first committed step in the biosynthesis of AMP from IMP. This is Adenylosuccinate synthetase from Syntrophobacter fumaroxidans (strain DSM 10017 / MPOB).